The sequence spans 751 residues: Zinc finger protein 337 (751 aa).

The KRAB domain maps to 12 to 83 (LAFGDVTVDF…ERRRRPGPCA (72 aa)). The segment covering 101–116 (QRQQQLQFSDQSFQSD) has biased composition (low complexity). The disordered stretch occupies residues 101–163 (QRQQQLQFSD…SSQGQRENPT (63 aa)). Residues 180–202 (FKCAERGQDFSRKMMVIIHKKAH) form a C2H2-type 1; degenerate zinc finger. 9 consecutive C2H2-type zinc fingers follow at residues 208-230 (FTCRECHQGFRDESALLLHQNTH), 236-258 (YVCSVCGRGFSLKANLLRHQRTH), 264-286 (FLCKVCGRGYTSKSYLTVHERTH), 292-314 (YECQECGRRFNDKSSYNKHLKAH), 320-342 (FVCKECGRGYTNKSYFVVHKRIH), 348-370 (YRCQECGRGFSNKSHLITHQRTH), 376-398 (FACRQCKQSFSVKGSLLRHQRTH), 404-426 (FVCKDCERSFSQKSTLVYHQRTH), and 432-454 (FVCRECGQGFIQKSTLVKHQITH). A Glycyl lysine isopeptide (Lys-Gly) (interchain with G-Cter in SUMO2) cross-link involves residue lysine 458. C2H2-type zinc fingers lie at residues 460 to 482 (FVCKDCGRGFIQKSTFTLHQRTH), 488 to 510 (YGCRECGRRFRDKSSYNKHLRAH), 516 to 538 (FFCRDCGRGFTLKPNLTIHQRTH), 544 to 566 (FMCKQCEKSFSLKANLLRHQWTH), 572 to 594 (FNCKDCGRGFILKSTLLFHQKTH), 600 to 622 (FICSECGQGFIWKSNLVKHQLAH), 628 to 650 (FVCKECGRGFNWKGNLLTHQRTH), 656 to 679 (FVCNVCGQGFSWKRSLTRHHWRIH), 685 to 707 (FVCQECKRGYTSKSDLTVHERIH), and 713 to 735 (YECQECGRKFSNKSYYSKHLKRH).

The protein belongs to the krueppel C2H2-type zinc-finger protein family.

Its subcellular location is the nucleus. In terms of biological role, may be involved in transcriptional regulation. This is Zinc finger protein 337 (ZNF337) from Homo sapiens (Human).